Here is a 396-residue protein sequence, read N- to C-terminus: Elongation factor Tu 1 (396 aa).

The region spanning 10 to 206 (KPHCNVGTIG…AVDDYIPQPE (197 aa)) is the tr-type G domain. Residues 19–26 (GHVDHGKT) are G1. 19 to 26 (GHVDHGKT) is a GTP binding site. Position 26 (T26) interacts with Mg(2+). The G2 stretch occupies residues 60–64 (GITIS). Residues 81 to 84 (DCPG) form a G3 region. GTP contacts are provided by residues 81-85 (DCPGH) and 136-139 (NKCD). Residues 136 to 139 (NKCD) form a G4 region. The G5 stretch occupies residues 174–176 (SAL).

It belongs to the TRAFAC class translation factor GTPase superfamily. Classic translation factor GTPase family. EF-Tu/EF-1A subfamily. Monomer.

It localises to the cytoplasm. The enzyme catalyses GTP + H2O = GDP + phosphate + H(+). In terms of biological role, GTP hydrolase that promotes the GTP-dependent binding of aminoacyl-tRNA to the A-site of ribosomes during protein biosynthesis. The protein is Elongation factor Tu 1 of Rhodospirillum rubrum (strain ATCC 11170 / ATH 1.1.1 / DSM 467 / LMG 4362 / NCIMB 8255 / S1).